Reading from the N-terminus, the 321-residue chain is Probable UDP-sugar transporter protein SLC35A4 (321 aa).

Over 1-22 (MYSVNIEPDGSNHSPSRKRLKQ) the chain is Cytoplasmic. A helical membrane pass occupies residues 23–43 (ILWGLMLVLSVTIYGSHAPLI). At 44 to 56 (YLCKVNGEIPFSS) the chain is on the lumenal side. The chain crosses the membrane as a helical span at residues 57–77 (SAVVLLIELSKFVISLVFFLI). Residues 78–91 (QDWKSLKASVSWHL) lie on the Cytoplasmic side of the membrane. A helical membrane pass occupies residues 92–112 (AAPYAVPAVLYGANNNLVVYI). Residues 113–119 (QHFMDPS) lie on the Lumenal side of the membrane. A helical transmembrane segment spans residues 120–140 (SFQVLSNLKIVSTAVLYSLFL). Topologically, residues 141–149 (RQRLSVRRW) are cytoplasmic. Residues 150-170 (LSVFLLLAAGVFYSYGGIQDL) form a helical membrane-spanning segment. Over 171–180 (EKVSSDTNLY) the chain is Lumenal. The chain crosses the membrane as a helical span at residues 181-201 (VTLPGLLLMLAYCLISGLSAV). At 202-211 (YTEMTLKTQK) the chain is on the cytoplasmic side. Residues 212 to 232 (IPLNMQNLYLYSFGIIINLTA) traverse the membrane as a helical segment. Residues 233 to 247 (HLTSSKNSDFFDGFS) are Lumenal-facing. The helical transmembrane segment at 248-268 (VWVWVIILSQALNGLIMSLVM) threads the bilayer. The Cytoplasmic segment spans residues 269–321 (KLSNNITRLFIISFSMLANGFLSFILFQLQLTALFFLAVVLIGLAVYMYYGMK).

Belongs to the nucleotide-sugar transporter family. SLC35A subfamily.

The protein localises to the golgi apparatus membrane. The catalysed reaction is CDP-L-ribitol(in) + CDP(out) = CDP-L-ribitol(out) + CDP(in). Functionally, mediates the transport of CDP-ribitol. Does not exhibit CMP-sialic acid, UDP-galactose and UDP-N-acetylglucosamine transport activity. The polypeptide is Probable UDP-sugar transporter protein SLC35A4 (Xenopus tropicalis (Western clawed frog)).